Reading from the N-terminus, the 144-residue chain is Large ribosomal subunit protein uL13 (144 aa).

Belongs to the universal ribosomal protein uL13 family. In terms of assembly, part of the 50S ribosomal subunit.

Functionally, this protein is one of the early assembly proteins of the 50S ribosomal subunit, although it is not seen to bind rRNA by itself. It is important during the early stages of 50S assembly. The chain is Large ribosomal subunit protein uL13 from Nitratidesulfovibrio vulgaris (strain DSM 19637 / Miyazaki F) (Desulfovibrio vulgaris).